We begin with the raw amino-acid sequence, 170 residues long: Large ribosomal subunit protein uL10 (170 aa).

Belongs to the universal ribosomal protein uL10 family. As to quaternary structure, part of the ribosomal stalk of the 50S ribosomal subunit. The N-terminus interacts with L11 and the large rRNA to form the base of the stalk. The C-terminus forms an elongated spine to which L12 dimers bind in a sequential fashion forming a multimeric L10(L12)X complex.

Functionally, forms part of the ribosomal stalk, playing a central role in the interaction of the ribosome with GTP-bound translation factors. The protein is Large ribosomal subunit protein uL10 of Lactobacillus acidophilus (strain ATCC 700396 / NCK56 / N2 / NCFM).